The sequence spans 362 residues: Molybdopterin synthase catalytic subunit (362 aa).

Substrate is bound by residues 101-102, lysine 117, and 124-126; these read HR and KKE.

This sequence belongs to the MoaE family. MOCS2B subfamily. Heterotetramer; composed of 2 small (Mocs2A) and 2 large (Mocs2B) subunits.

Its subcellular location is the cytoplasm. The enzyme catalyses 2 [molybdopterin-synthase sulfur-carrier protein]-C-terminal-Gly-aminoethanethioate + cyclic pyranopterin phosphate + H2O = molybdopterin + 2 [molybdopterin-synthase sulfur-carrier protein]-C-terminal Gly-Gly + 2 H(+). It functions in the pathway cofactor biosynthesis; molybdopterin biosynthesis. In terms of biological role, catalytic subunit of the molybdopterin synthase complex, a complex that catalyzes the conversion of precursor Z into molybdopterin. Acts by mediating the incorporation of 2 sulfur atoms from thiocarboxylated Mocs2A into precursor Z to generate a dithiolene group. This is Molybdopterin synthase catalytic subunit from Drosophila grimshawi (Hawaiian fruit fly).